Consider the following 278-residue polypeptide: 2,5-diketo-D-gluconic acid reductase A (278 aa).

Y50 serves as the catalytic Proton donor. H108 is a substrate binding site. 188-242 contributes to the NADP(+) binding site; the sequence is GPLGQGKYDLFGAEPVTAAAAAHGKTPAQAVLRWHLQKGFVVFPKSVRRERLEEN. Residues 259–278 form a disordered region; the sequence is DAMDPGDGSGRVSAHPDEVD.

It belongs to the aldo/keto reductase family. Monomer.

The protein localises to the cytoplasm. It catalyses the reaction 2-dehydro-L-idonate + NADP(+) = 2,5-didehydro-D-gluconate + NADPH + H(+). Inhibited by Zn(2+), Fe(3+), Cu(2+) and Ni(2+). Its function is as follows. Catalyzes the reduction of 2,5-diketo-D-gluconic acid (25DKG) to 2-keto-L-gulonic acid (2KLG). 5-keto-D-fructose and dihydroxyacetone can also serve as substrates. 25DKGR-A exhibits a greater selectivity for the substrate and higher thermal stability than 25DKGR-B. The protein is 2,5-diketo-D-gluconic acid reductase A (dkgA) of Corynebacterium sp. (strain ATCC 31090).